The sequence spans 200 residues: Cysteine-rich venom protein VAR8 (200 aa).

The first 22 residues, 1–22, serve as a signal peptide directing secretion; that stretch reads MILLKLYLTLAAILCQSRGTTS. The region spanning 41-169 is the SCP domain; that stretch reads NKHNDLRRTV…PLKYFLVCQY (129 aa). Intrachain disulfides connect Cys-77–Cys-156, Cys-95–Cys-170, Cys-151–Cys-167, and Cys-189–Cys-196.

This sequence belongs to the CRISP family. Post-translationally, contains 8 disulfide bonds. As to expression, expressed by the venom gland.

Its subcellular location is the secreted. Blocks ryanodine receptors, and potassium channels. This chain is Cysteine-rich venom protein VAR8, found in Varanus acanthurus (Ridge-tailed monitor).